The sequence spans 637 residues: Poly(A) polymerase beta (637 aa).

Positions 1 to 10 (MMPFPVTTQG) are enriched in low complexity. Residues 1–23 (MMPFPVTTQGPPQPAPPPNRYGV) are disordered. ATP contacts are provided by residues 101–103 (FGS), Thr-110, 114–116 (DID), Asp-168, Lys-229, Tyr-238, and 247–248 (GV). Residues Asp-114, Asp-116, and Asp-168 each contribute to the Mg(2+) site. A disordered region spans residues 535-555 (SVPSSTSTMKTGPLISSSQGR).

Belongs to the poly(A) polymerase family. As to quaternary structure, interacts with GSG1. Mg(2+) is required as a cofactor. Mn(2+) serves as cofactor. In terms of tissue distribution, testis specific.

The protein localises to the nucleus. It catalyses the reaction RNA(n) + ATP = RNA(n)-3'-adenine ribonucleotide + diphosphate. The chain is Poly(A) polymerase beta from Homo sapiens (Human).